A 321-amino-acid polypeptide reads, in one-letter code: Glutaminase (321 aa).

Residues serine 69, asparagine 120, glutamate 165, asparagine 172, tyrosine 196, tyrosine 248, and valine 266 each coordinate substrate.

It belongs to the glutaminase family. In terms of assembly, homotetramer.

The enzyme catalyses L-glutamine + H2O = L-glutamate + NH4(+). This is Glutaminase from Parabacteroides distasonis (strain ATCC 8503 / DSM 20701 / CIP 104284 / JCM 5825 / NCTC 11152).